A 424-amino-acid polypeptide reads, in one-letter code: Tyrosine--tRNA ligase (424 aa).

Tyr-37 is a binding site for L-tyrosine. Residues 42-51 carry the 'HIGH' region motif; it reads PTADSLHLGH. The residue at position 144 (Lys-144) is an N6-acetyllysine. L-tyrosine contacts are provided by Tyr-175 and Gln-179. Positions 235–239 match the 'KMSKS' region motif; it reads KFGKT. Residue Lys-238 participates in ATP binding. An S4 RNA-binding domain is found at 357 to 414; sequence ADLMQALVDSELQPSRGQARKTIASNAVTINGEKQSDPEYFFKEEDRLFGRFTLLRRG.

The protein belongs to the class-I aminoacyl-tRNA synthetase family. TyrS type 1 subfamily. In terms of assembly, homodimer.

The protein localises to the cytoplasm. It catalyses the reaction tRNA(Tyr) + L-tyrosine + ATP = L-tyrosyl-tRNA(Tyr) + AMP + diphosphate + H(+). In terms of biological role, catalyzes the attachment of tyrosine to tRNA(Tyr) in a two-step reaction: tyrosine is first activated by ATP to form Tyr-AMP and then transferred to the acceptor end of tRNA(Tyr). The sequence is that of Tyrosine--tRNA ligase from Escherichia fergusonii (strain ATCC 35469 / DSM 13698 / CCUG 18766 / IAM 14443 / JCM 21226 / LMG 7866 / NBRC 102419 / NCTC 12128 / CDC 0568-73).